Consider the following 287-residue polypeptide: Probable 18S rRNA (guanine-N(7))-methyltransferase (287 aa).

Residues 214–287 (GVEGEEYEQQ…FSGRKRGPKF (74 aa)) form a disordered region. The segment covering 217–228 (GEEYEQQEEEDS) has biased composition (acidic residues). Residues 234–245 (SNRKRDRRRVTK) are compositionally biased toward basic residues. Residues 253–278 (KTKEWIMNKKDRQRKQGREIKNDSKF) are compositionally biased toward basic and acidic residues.

This sequence belongs to the class I-like SAM-binding methyltransferase superfamily. BUD23/WBSCR22 family.

It is found in the nucleus. The protein localises to the nucleoplasm. It localises to the cytoplasm. The protein resides in the perinuclear region. It catalyses the reaction a guanosine in 18S rRNA + S-adenosyl-L-methionine = an N(7)-methylguanosine in 18S rRNA + S-adenosyl-L-homocysteine. In terms of biological role, S-adenosyl-L-methionine-dependent methyltransferase that specifically methylates the N(7) position of a guanine in 18S rRNA. Important for biogenesis end export of the 40S ribosomal subunit independent on its methyltransferase activity. Functionally, S-adenosyl-L-methionine-dependent methyltransferase that specifically methylates the N(7) position of a guanine in 18S rRNA. Requires the methyltransferase adapter protein TRM112 for full rRNA methyltransferase activity. Involved in the pre-rRNA processing steps leading to small-subunit rRNA production independently of its RNA-modifying catalytic activity. Important for biogenesis end export of the 40S ribosomal subunit independent on its methyltransferase activity. This chain is Probable 18S rRNA (guanine-N(7))-methyltransferase, found in Dictyostelium discoideum (Social amoeba).